Here is a 484-residue protein sequence, read N- to C-terminus: Aspartyl/glutamyl-tRNA(Asn/Gln) amidotransferase subunit B (484 aa).

This sequence belongs to the GatB/GatE family. GatB subfamily. Heterotrimer of A, B and C subunits.

It carries out the reaction L-glutamyl-tRNA(Gln) + L-glutamine + ATP + H2O = L-glutaminyl-tRNA(Gln) + L-glutamate + ADP + phosphate + H(+). The catalysed reaction is L-aspartyl-tRNA(Asn) + L-glutamine + ATP + H2O = L-asparaginyl-tRNA(Asn) + L-glutamate + ADP + phosphate + 2 H(+). Functionally, allows the formation of correctly charged Asn-tRNA(Asn) or Gln-tRNA(Gln) through the transamidation of misacylated Asp-tRNA(Asn) or Glu-tRNA(Gln) in organisms which lack either or both of asparaginyl-tRNA or glutaminyl-tRNA synthetases. The reaction takes place in the presence of glutamine and ATP through an activated phospho-Asp-tRNA(Asn) or phospho-Glu-tRNA(Gln). The sequence is that of Aspartyl/glutamyl-tRNA(Asn/Gln) amidotransferase subunit B from Anaeromyxobacter dehalogenans (strain 2CP-1 / ATCC BAA-258).